Reading from the N-terminus, the 156-residue chain is MKLHDLKPTPGSRKDRKRVGRGPGGTDKTAGRGHKGQKSRSGAGKGAFFEGGRSRLIARLPKRGFNNVGTTYEVVKLSQLQDLEDTTFDRDTLEAYRLVRRKNRPVKLLASGEISRAVTVHVDAASAAAIKAVEAAGGRVVLPEVQTQQDDAQKAE.

Positions 1–48 (MKLHDLKPTPGSRKDRKRVGRGPGGTDKTAGRGHKGQKSRSGAGKGAF) are disordered.

Belongs to the universal ribosomal protein uL15 family. As to quaternary structure, part of the 50S ribosomal subunit. Contacts proteins L4, L21 and L35.

Its function is as follows. Binds to the 23S rRNA. The sequence is that of Large ribosomal subunit protein uL15 (rplO) from Deinococcus radiodurans (strain ATCC 13939 / DSM 20539 / JCM 16871 / CCUG 27074 / LMG 4051 / NBRC 15346 / NCIMB 9279 / VKM B-1422 / R1).